The primary structure comprises 124 residues: ATP synthase epsilon chain (124 aa).

Residues 97–124 (ARVREASSEEEKSRAESELRAVKRSKEK) are disordered.

It belongs to the ATPase epsilon chain family. F-type ATPases have 2 components, CF(1) - the catalytic core - and CF(0) - the membrane proton channel. CF(1) has five subunits: alpha(3), beta(3), gamma(1), delta(1), epsilon(1). CF(0) has three main subunits: a, b and c.

It localises to the cell membrane. Functionally, produces ATP from ADP in the presence of a proton gradient across the membrane. The sequence is that of ATP synthase epsilon chain from Corynebacterium urealyticum (strain ATCC 43042 / DSM 7109).